A 632-amino-acid chain; its full sequence is 2-oxoacid:ferredoxin oxidoreductase subunit alpha (632 aa).

The YPITP motif signature appears at 253–257 (YPITP). 2 residues coordinate substrate: Thr-256 and Arg-344.

Heterodimer composed of an alpha and a beta subunit.

It is found in the cytoplasm. The catalysed reaction is a 2-oxocarboxylate + 2 oxidized [2Fe-2S]-[ferredoxin] + CoA = an acyl-CoA + 2 reduced [2Fe-2S]-[ferredoxin] + CO2 + H(+). Its function is as follows. Catalyzes the coenzyme A-dependent oxidative decarboxylation of different 2-oxoacids such as 2-oxoglutarate, pyruvate and 2-oxobutyrate to form their CoA derivatives. The protein is 2-oxoacid:ferredoxin oxidoreductase subunit alpha of Sulfolobus sp.